We begin with the raw amino-acid sequence, 231 residues long: Sugar fermentation stimulation protein homolog (231 aa).

Belongs to the SfsA family.

The polypeptide is Sugar fermentation stimulation protein homolog (Geotalea daltonii (strain DSM 22248 / JCM 15807 / FRC-32) (Geobacter daltonii)).